The following is a 94-amino-acid chain: Large ribosomal subunit protein bL25 (94 aa).

This sequence belongs to the bacterial ribosomal protein bL25 family. As to quaternary structure, part of the 50S ribosomal subunit; part of the 5S rRNA/L5/L18/L25 subcomplex. Contacts the 5S rRNA. Binds to the 5S rRNA independently of L5 and L18.

Its function is as follows. This is one of the proteins that binds to the 5S RNA in the ribosome where it forms part of the central protuberance. The protein is Large ribosomal subunit protein bL25 of Escherichia coli (strain K12 / DH10B).